Here is a 225-residue protein sequence, read N- to C-terminus: Suppressor of cytokine signaling 3 (225 aa).

Residues 22 to 33 (LKTFSSKSEYQL) are kinase inhibitory region (KIR). The segment at 34–45 (VVNAVRKLQESG) is extended SH2 subdomain (ESS). In terms of domain architecture, SH2 spans 46-142 (FYWSAVTGGE…APSFPSPPTE (97 aa)). Pro residues predominate over residues 131–142 (PGAPSFPSPPTE). Residues 131 to 162 (PGAPSFPSPPTEPSSEVPEQPSAQPLPGSPPR) form a disordered region. A compositionally biased stretch (low complexity) spans 143 to 155 (PSSEVPEQPSAQP). Positions 177 to 224 (VLSRPLSSNVATLQHLCRKTVNGHLDSYEKVTQLPGPIREFLDQYDAP) constitute an SOCS box domain.

Interacts with multiple activated proteins of the tyrosine kinase signaling pathway including IGF1 receptor, insulin receptor and JAK2. Binding to JAK2 is mediated through the KIR and SH2 domains to a phosphorylated tyrosine residue within the JAK2 JH1 domain. Binds specific activated tyrosine residues of the leptin, EPO, IL12, GSCF and gp130 receptors. Interaction with CSNK1E stabilizes SOCS3 protein. Component of the probable ECS(SOCS3) E3 ubiquitin-protein ligase complex which contains CUL5, RNF7/RBX2, Elongin BC complex and SOCS3. Interacts with CUL5, RNF7, ELOB and ELOC. Interacts with CUL2. Interacts with FGFR3. Interacts with INSR. Interacts with BCL10; this interaction may interfere with BCL10-binding with PELI2. Interacts with NOD2 (via CARD domain); the interaction promotes NOD2 degradation. In terms of processing, phosphorylated on tyrosine residues after stimulation by the cytokines, IL-2, EPO or IGF1. In terms of tissue distribution, widely expressed with high expression in heart, placenta, skeletal muscle, peripheral blood leukocytes, fetal and adult lung, and fetal liver and kidney. Lower levels in thymus.

The protein operates within protein modification; protein ubiquitination. SOCS family proteins form part of a classical negative feedback system that regulates cytokine signal transduction. SOCS3 is involved in negative regulation of cytokines that signal through the JAK/STAT pathway. Inhibits cytokine signal transduction by binding to tyrosine kinase receptors including IL6ST/gp130, LIF, erythropoietin, insulin, IL12, GCSF and leptin receptors. Binding to JAK2 inhibits its kinase activity and regulates IL6 signaling. Suppresses fetal liver erythropoiesis. Regulates onset and maintenance of allergic responses mediated by T-helper type 2 cells. Probable substrate recognition component of a SCF-like ECS (Elongin BC-CUL2/5-SOCS-box protein) E3 ubiquitin-protein ligase complex which mediates the ubiquitination and subsequent proteasomal degradation of target proteins. In Homo sapiens (Human), this protein is Suppressor of cytokine signaling 3.